The chain runs to 499 residues: 6-hydroxynicotinate reductase (499 aa).

2 4Fe-4S ferredoxin-type domains span residues 1 to 29 (MFKIDEEKCKKCRMCVKECPVHAVYYEKK) and 31 to 61 (KGAIVEITEKCVECGICKRVCKFGAIENDAP). Residues Cys9, Cys12, Cys15, Cys19, Cys41, Cys44, Cys47, and Cys51 each contribute to the [4Fe-4S] cluster site.

In terms of assembly, homotetramer. An oxidized flavin is required as a cofactor. Requires [2Fe-2S] cluster as cofactor. The cofactor is [4Fe-4S] cluster.

It catalyses the reaction 1,4,5,6-tetrahydro-6-oxonicotinate + oxidized 2[4Fe-4S]-[ferredoxin] = 6-hydroxynicotinate + reduced 2[4Fe-4S]-[ferredoxin] + 2 H(+). It functions in the pathway cofactor degradation; nicotinate degradation; propanoate and pyruvate from 6-hydroxynicotinate: step 1/8. Its function is as follows. Catalyzes the reversible reduction of 6-hydroxynicotinate to 6-oxo-1,4,5,6-tetrahydronicotinate. The chain is 6-hydroxynicotinate reductase from Eubacterium barkeri (Clostridium barkeri).